The sequence spans 319 residues: Protein SICKLE (319 aa).

Disordered regions lie at residues 1–59 (MEDS…TQRF), 71–239 (SFKK…PGAE), and 262–299 (CSDASSSSSTGQAWLPKSIAPKKSVTSEATHKTSSNQQ). 2 stretches are compositionally biased toward polar residues: residues 27–56 (TTGTETSMSTGHLSNPLAETSNHQQDSFET) and 78–88 (PKQQYISSPSH). Pro residues predominate over residues 93 to 103 (PVPPQFPPSVP). A compositionally biased stretch (polar residues) spans 185 to 210 (SYNNTPPQFSNYGRQNANWGGNTYPN). Residues 228 to 238 (DGGRRPMEPGA) are compositionally biased toward basic and acidic residues. A compositionally biased stretch (polar residues) spans 285–299 (SVTSEATHKTSSNQQ).

As to quaternary structure, interacts with ubiquitin thioesterases UBP12 and UBP13, and with protein phosphatase 2A subunits PP2AB1, PP2AB2, PP2A3, PP2A4, PP2AA1 and PP2AA2. In terms of tissue distribution, expressed in the shoot apical meristem (SAM), embryos, seedlings, root tips, and root and leaf primordia.

The protein resides in the nucleus. It is found in the cytoplasm. Its subcellular location is the cytosol. Its function is as follows. Involved in miRNAs and siRNAs biogenesis and thus promotes gene silencing. Modulates auxin (IAA) transport-related developmental programs by regulating protein phosphatase 2A (PP2As)-driven auxin efflux carrier PIN proteins recycling and polarity. Required during development. Necessary for abiotic stress (e.g. chilling and salt) tolerance. In Arabidopsis thaliana (Mouse-ear cress), this protein is Protein SICKLE.